The primary structure comprises 1345 residues: DNA-directed RNA polymerase subunit beta' (1345 aa).

Residues Cys60, Cys62, Cys75, and Cys78 each coordinate Zn(2+). Mg(2+) contacts are provided by Asp536, Asp538, and Asp540. 4 residues coordinate Zn(2+): Cys895, Cys974, Cys981, and Cys984.

Belongs to the RNA polymerase beta' chain family. The RNAP catalytic core consists of 2 alpha, 1 beta, 1 beta' and 1 omega subunit. When a sigma factor is associated with the core the holoenzyme is formed, which can initiate transcription. Mg(2+) is required as a cofactor. The cofactor is Zn(2+).

It carries out the reaction RNA(n) + a ribonucleoside 5'-triphosphate = RNA(n+1) + diphosphate. Its function is as follows. DNA-dependent RNA polymerase catalyzes the transcription of DNA into RNA using the four ribonucleoside triphosphates as substrates. This Bifidobacterium longum (strain DJO10A) protein is DNA-directed RNA polymerase subunit beta'.